A 510-amino-acid chain; its full sequence is Aspartate kinase FUB3 (510 aa).

ACT domains lie at 372–440 (ILSN…VLPD) and 446–510 (LVGA…KNAM).

The protein belongs to the aspartokinase family.

It catalyses the reaction L-aspartate + ATP = 4-phospho-L-aspartate + ADP. Its pathway is mycotoxin biosynthesis. Aspartate kinase; part of the gene cluster that mediates the biosynthesis of fusaric acid, a mycotoxin with low to moderate toxicity to animals and humans, but with high phytotoxic properties. L-aspartate is suggested as fusaric acid amino acid precursor that is activated and further processed to O-acetyl-L-homoserine by cluster enzymes aspartate kinase FUB3 and homoserine O-acetyltransferase FUB5, as well as enzymes of the primary metabolism. The polyketide synthase (PKS) FUB1 generates the triketide trans-2-hexenal which is presumptively released by the hydrolase FUB4 and linked to the NRPS-bound amino acid precursor by NAD(P)-dependent dehydrogenase FUB6. FUB1, FUB4, and the non-canonical NRPS Fub8 may form an enzyme complex. Further processing of the NRPS-bound intermediate might be carried out by FUB6 and the sulfhydrylase FUB7, enabling a spontaneous electrocyclization to close the carbon backbone of fusaric acid. Dihydrofusaric acid is likely to be released via reduction by the thioester reductase (TR) domain of FUB8 whereupon the final oxidation to fusaric acid may (also) be performed by the FMN-dependent dehydrogenase FUB9. In Gibberella moniliformis (strain M3125 / FGSC 7600) (Maize ear and stalk rot fungus), this protein is Aspartate kinase FUB3.